The sequence spans 1323 residues: DNA-directed RNA polymerase subunit beta' (1323 aa).

Zn(2+) contacts are provided by Cys-60, Cys-62, Cys-75, and Cys-78. Mg(2+) contacts are provided by Asp-535, Asp-537, and Asp-539. The Zn(2+) site is built by Cys-894, Cys-977, Cys-984, and Cys-987.

The protein belongs to the RNA polymerase beta' chain family. As to quaternary structure, the RNAP catalytic core consists of 2 alpha, 1 beta, 1 beta' and 1 omega subunit. When a sigma factor is associated with the core the holoenzyme is formed, which can initiate transcription. Mg(2+) is required as a cofactor. Requires Zn(2+) as cofactor.

It carries out the reaction RNA(n) + a ribonucleoside 5'-triphosphate = RNA(n+1) + diphosphate. Functionally, DNA-dependent RNA polymerase catalyzes the transcription of DNA into RNA using the four ribonucleoside triphosphates as substrates. The chain is DNA-directed RNA polymerase subunit beta' from Corynebacterium jeikeium (strain K411).